A 48-amino-acid polypeptide reads, in one-letter code: ATP synthase protein 8 (48 aa).

Residues Leu4–Ile24 traverse the membrane as a helical segment.

Belongs to the ATPase protein 8 family. F-type ATPases have 2 components, CF(1) - the catalytic core - and CF(0) - the membrane proton channel.

The protein resides in the mitochondrion membrane. Its function is as follows. Mitochondrial membrane ATP synthase (F(1)F(0) ATP synthase or Complex V) produces ATP from ADP in the presence of a proton gradient across the membrane which is generated by electron transport complexes of the respiratory chain. F-type ATPases consist of two structural domains, F(1) - containing the extramembraneous catalytic core and F(0) - containing the membrane proton channel, linked together by a central stalk and a peripheral stalk. During catalysis, ATP synthesis in the catalytic domain of F(1) is coupled via a rotary mechanism of the central stalk subunits to proton translocation. Part of the complex F(0) domain. Minor subunit located with subunit a in the membrane. This is ATP synthase protein 8 (atp8) from Emericella nidulans (Aspergillus nidulans).